Consider the following 167-residue polypeptide: Small heat shock protein C1 (167 aa).

The 109-residue stretch at 59–167 (SLYESNSIKS…EQEAREIVID (109 aa)) folds into the sHSP domain.

Belongs to the small heat shock protein (HSP20) family.

This Rickettsia conorii (strain ATCC VR-613 / Malish 7) protein is Small heat shock protein C1 (hspC1).